Consider the following 239-residue polypeptide: Ribonuclease PH (239 aa).

Residues arginine 86 and 124 to 126 (GTR) contribute to the phosphate site.

It belongs to the RNase PH family. Homohexameric ring arranged as a trimer of dimers.

It catalyses the reaction tRNA(n+1) + phosphate = tRNA(n) + a ribonucleoside 5'-diphosphate. Its function is as follows. Phosphorolytic 3'-5' exoribonuclease that plays an important role in tRNA 3'-end maturation. Removes nucleotide residues following the 3'-CCA terminus of tRNAs; can also add nucleotides to the ends of RNA molecules by using nucleoside diphosphates as substrates, but this may not be physiologically important. Probably plays a role in initiation of 16S rRNA degradation (leading to ribosome degradation) during starvation. The protein is Ribonuclease PH of Aromatoleum aromaticum (strain DSM 19018 / LMG 30748 / EbN1) (Azoarcus sp. (strain EbN1)).